The primary structure comprises 300 residues: 33 kDa chaperonin (300 aa).

2 disulfides stabilise this stretch: cysteine 235-cysteine 237 and cysteine 269-cysteine 272.

This sequence belongs to the HSP33 family. In terms of processing, under oxidizing conditions two disulfide bonds are formed involving the reactive cysteines. Under reducing conditions zinc is bound to the reactive cysteines and the protein is inactive.

The protein resides in the cytoplasm. Its function is as follows. Redox regulated molecular chaperone. Protects both thermally unfolding and oxidatively damaged proteins from irreversible aggregation. Plays an important role in the bacterial defense system toward oxidative stress. The chain is 33 kDa chaperonin from Pseudomonas savastanoi pv. phaseolicola (strain 1448A / Race 6) (Pseudomonas syringae pv. phaseolicola (strain 1448A / Race 6)).